Reading from the N-terminus, the 327-residue chain is MPHLAELVAKAKAAVEGAQDIAALDLVRVEYLGKKGHLTLQMTSLRELPAEERPAAGAVINQAKQEIQEALNARKEKLESAVLNARLAAETIDVSLPGRRMENGGLHPVTRTIERIETFFGELGFSVESGPEIEDDYHNFDALNIPAHHPARADHDTFWFDATRLLRTQTSGVQIRTMQEQQPPIRIIVPGRVYRNDYDQTHTPMFHQMEGLIVDRDISFTNLKGTLHDFLRNFFEEDLQIRFRPSYFPFTEPSAEVDVMGKNGKWLEVLGCGMVHPNVLRNVGIDPEIYSGFAFGMGMERLTMLRYGVTDLRAFFENDLRFLKQFK.

Glu252 serves as a coordination point for Mg(2+).

It belongs to the class-II aminoacyl-tRNA synthetase family. Phe-tRNA synthetase alpha subunit type 1 subfamily. Tetramer of two alpha and two beta subunits. The cofactor is Mg(2+).

Its subcellular location is the cytoplasm. It carries out the reaction tRNA(Phe) + L-phenylalanine + ATP = L-phenylalanyl-tRNA(Phe) + AMP + diphosphate + H(+). The protein is Phenylalanine--tRNA ligase alpha subunit of Yersinia pestis bv. Antiqua (strain Antiqua).